The sequence spans 389 residues: STE20-related kinase adapter protein alpha (389 aa).

Residues 11–321 enclose the Protein kinase domain; the sequence is YELLTIIGRG…AGALLNHPFF (311 aa).

This sequence belongs to the protein kinase superfamily. STE Ser/Thr protein kinase family. STE20 subfamily. In terms of assembly, component of a trimeric complex composed of STK11/LKB1, STRAD (STRADA or STRADB) and CAB39/MO25 (CAB39/MO25alpha or CAB39L/MO25beta): the complex tethers STK11/LKB1 in the cytoplasm and stimulates its catalytic activity. Expressed in brain, hypothalamus, heart and skeletal muscle.

Its subcellular location is the nucleus. It localises to the cytoplasm. Functionally, pseudokinase which, in complex with CAB39/MO25 (CAB39/MO25alpha or CAB39L/MO25beta), binds to and activates STK11/LKB1. Adopts a closed conformation typical of active protein kinases and binds STK11/LKB1 as a pseudosubstrate, promoting conformational change of STK11/LKB1 in an active conformation. In Gallus gallus (Chicken), this protein is STE20-related kinase adapter protein alpha (STRADA).